Reading from the N-terminus, the 965-residue chain is Valine--tRNA ligase (965 aa).

Residues 1–22 (MENTPSHINKTEPSLDKTYSPQ) form a disordered region. Positions 56–66 (PNVTGSLHMGH) match the 'HIGH' region motif. The 'KMSKS' region motif lies at 568–572 (KMSKS). An ATP-binding site is contributed by K571. Residues 896–965 (LIDKATELDR…IEQQATIAAL (70 aa)) adopt a coiled-coil conformation.

This sequence belongs to the class-I aminoacyl-tRNA synthetase family. ValS type 1 subfamily. In terms of assembly, monomer.

Its subcellular location is the cytoplasm. The enzyme catalyses tRNA(Val) + L-valine + ATP = L-valyl-tRNA(Val) + AMP + diphosphate. Catalyzes the attachment of valine to tRNA(Val). As ValRS can inadvertently accommodate and process structurally similar amino acids such as threonine, to avoid such errors, it has a 'posttransfer' editing activity that hydrolyzes mischarged Thr-tRNA(Val) in a tRNA-dependent manner. In Yersinia pseudotuberculosis serotype I (strain IP32953), this protein is Valine--tRNA ligase.